The chain runs to 433 residues: Glutamate-1-semialdehyde 2,1-aminomutase (433 aa).

Lysine 273 is subject to N6-(pyridoxal phosphate)lysine.

It belongs to the class-III pyridoxal-phosphate-dependent aminotransferase family. HemL subfamily. Homodimer. Pyridoxal 5'-phosphate is required as a cofactor.

It is found in the cytoplasm. The enzyme catalyses (S)-4-amino-5-oxopentanoate = 5-aminolevulinate. It participates in porphyrin-containing compound metabolism; protoporphyrin-IX biosynthesis; 5-aminolevulinate from L-glutamyl-tRNA(Glu): step 2/2. The protein operates within porphyrin-containing compound metabolism; chlorophyll biosynthesis. The chain is Glutamate-1-semialdehyde 2,1-aminomutase from Rippkaea orientalis (strain PCC 8801 / RF-1) (Cyanothece sp. (strain PCC 8801)).